The following is a 1078-amino-acid chain: Lon protease homolog, mitochondrial (1078 aa).

The transit peptide at 1-27 directs the protein to the mitochondrion; it reads MIKASKCNKPRALFLVRVSIPRTFIRN. The segment covering 71 to 123 has biased composition (basic and acidic residues); it reads SEKEKQPSTDKSNDKDKPSRKEKGKDKEKENEEKKDINMDEKYEINEETDTKP. The segment at 71-179 is disordered; the sequence is SEKEKQPSTD…KEFLSPSDSG (109 aa). Residues 127-157 show a composition bias toward low complexity; the sequence is PNNPVSSKSNISSSSGGDNNNNNNNNNNNND. Residues 158–172 show a composition bias toward basic and acidic residues; sequence SDGKNDDGSPKDKEF. The region spanning 182–400 is the Lon N-terminal domain; the sequence is PPFLAIAMKD…LSLQLLQVEA (219 aa). Residue 548–555 coordinates ATP; that stretch reads GPPGTGKT. The segment at 792 to 825 is disordered; sequence NSPIEYIQSNTEVKAETTTESQQEQEKEKEKDEE. Positions 815 to 825 are enriched in basic and acidic residues; sequence EQEKEKEKDEE. The Lon proteolytic domain maps to 861-1049; that stretch reads TLNPGVATGL…SEVFEHLFQG (189 aa). Catalysis depends on residues serine 955 and lysine 998.

It belongs to the peptidase S16 family. In terms of assembly, homohexamer or homoheptamer. Organized in a ring with a central cavity.

It is found in the mitochondrion matrix. The enzyme catalyses Hydrolysis of proteins in presence of ATP.. Functionally, ATP-dependent serine protease that mediates the selective degradation of misfolded, unassembled or oxidatively damaged polypeptides as well as certain short-lived regulatory proteins in the mitochondrial matrix. May also have a chaperone function in the assembly of inner membrane protein complexes. Participates in the regulation of mitochondrial gene expression and in the maintenance of the integrity of the mitochondrial genome. Binds to mitochondrial DNA in a site-specific manner. The sequence is that of Lon protease homolog, mitochondrial from Candida albicans (strain SC5314 / ATCC MYA-2876) (Yeast).